A 444-amino-acid chain; its full sequence is Trigger factor (444 aa).

The PPIase FKBP-type domain occupies 166-251 (GDQIVIDFKG…VKAVKAPKAA (86 aa)).

The protein belongs to the FKBP-type PPIase family. Tig subfamily.

Its subcellular location is the cytoplasm. It carries out the reaction [protein]-peptidylproline (omega=180) = [protein]-peptidylproline (omega=0). In terms of biological role, involved in protein export. Acts as a chaperone by maintaining the newly synthesized protein in an open conformation. Functions as a peptidyl-prolyl cis-trans isomerase. This chain is Trigger factor, found in Paracoccus denitrificans (strain Pd 1222).